A 648-amino-acid chain; its full sequence is ATP-dependent DNA helicase Q1 (648 aa).

The 176-residue stretch at Ile100–Leu275 folds into the Helicase ATP-binding domain. Residue Met113–Ser120 participates in ATP binding. Positions Asp219 to His222 match the DEVH box motif. The Helicase C-terminal domain occupies Asp299–Ser451. Residues Cys453, Cys471, Cys475, and Cys478 each coordinate Zn(2+). An N6-acetyllysine mark is found at Lys514 and Lys522. The residue at position 597 (Ser597) is a Phosphoserine. The interval Ala601 to Ala648 is disordered. Over residues Arg606–Glu617 the composition is skewed to basic and acidic residues. Residues Gln618–Lys636 are compositionally biased toward polar residues. A Phosphoserine modification is found at Ser633. Positions Gly639–Ala648 are enriched in basic residues.

The protein belongs to the helicase family. RecQ subfamily. As to quaternary structure, may form homodimers or higher order oligomers. Interacts with EXO1. Interacts with MLH1. Interacts with PARP1. It depends on Mg(2+) as a cofactor. Requires Mn(2+) as cofactor. The cofactor is Zn(2+). In terms of tissue distribution, expressed in all tissues examined. Only expressed in spermatocytes. Expression increases at pachytene (17 days old) and decreases after completion of meiosis II (7 weeks old).

The protein localises to the nucleus. The enzyme catalyses Couples ATP hydrolysis with the unwinding of duplex DNA by translocating in the 3'-5' direction.. It catalyses the reaction ATP + H2O = ADP + phosphate + H(+). The catalysed reaction is dATP + H2O = dADP + phosphate + H(+). Functionally, DNA helicase that plays a role in DNA damage repair and genome stability. Exhibits a magnesium- and ATP-dependent DNA-helicase activity that unwinds single- and double-stranded DNA in a 3'-5' direction. Plays a role in restoring regressed replication forks. Required to restart stalled replication forks induced by abortive topoisomerase 1 and 2 lesions. May play a role in the repair of DNA that is damaged by ultraviolet light or other mutagens. This is ATP-dependent DNA helicase Q1 (Recql) from Mus musculus (Mouse).